Here is a 335-residue protein sequence, read N- to C-terminus: Ketol-acid reductoisomerase (NADP(+)) (335 aa).

The region spanning 5–185 (SKIYTDKDSN…GATRAGVIPT (181 aa)) is the KARI N-terminal Rossmann domain. Residues 28–31 (YGSQ), serine 56, and 86–89 (DMVQ) each bind NADP(+). Histidine 111 is an active-site residue. Glycine 137 is a binding site for NADP(+). Positions 186–331 (TFKEETETDL…NQLKDLIQKG (146 aa)) constitute a KARI C-terminal knotted domain. Positions 194, 198, 230, and 234 each coordinate Mg(2+). Residue serine 255 coordinates substrate.

It belongs to the ketol-acid reductoisomerase family. The cofactor is Mg(2+).

The catalysed reaction is (2R)-2,3-dihydroxy-3-methylbutanoate + NADP(+) = (2S)-2-acetolactate + NADPH + H(+). The enzyme catalyses (2R,3R)-2,3-dihydroxy-3-methylpentanoate + NADP(+) = (S)-2-ethyl-2-hydroxy-3-oxobutanoate + NADPH + H(+). It functions in the pathway amino-acid biosynthesis; L-isoleucine biosynthesis; L-isoleucine from 2-oxobutanoate: step 2/4. It participates in amino-acid biosynthesis; L-valine biosynthesis; L-valine from pyruvate: step 2/4. In terms of biological role, involved in the biosynthesis of branched-chain amino acids (BCAA). Catalyzes an alkyl-migration followed by a ketol-acid reduction of (S)-2-acetolactate (S2AL) to yield (R)-2,3-dihydroxy-isovalerate. In the isomerase reaction, S2AL is rearranged via a Mg-dependent methyl migration to produce 3-hydroxy-3-methyl-2-ketobutyrate (HMKB). In the reductase reaction, this 2-ketoacid undergoes a metal-dependent reduction by NADPH to yield (R)-2,3-dihydroxy-isovalerate. The protein is Ketol-acid reductoisomerase (NADP(+)) of Saccharolobus islandicus (strain Y.G.57.14 / Yellowstone #1) (Sulfolobus islandicus).